The sequence spans 375 residues: 2-methylcitrate synthase (375 aa).

Substrate is bound by residues K72 and H187. H222 is an active-site residue. 255–259 (KIMGF) provides a ligand contact to CoA. The active site involves H261. R270 serves as a coordination point for substrate. D312 is an active-site residue. Substrate is bound by residues R337 and R356.

Belongs to the citrate synthase family. In terms of assembly, homodimer.

It catalyses the reaction propanoyl-CoA + oxaloacetate + H2O = (2S,3S)-2-methylcitrate + CoA + H(+). The catalysed reaction is oxaloacetate + acetyl-CoA + H2O = citrate + CoA + H(+). It functions in the pathway organic acid metabolism; propanoate degradation. The protein operates within carbohydrate metabolism; tricarboxylic acid cycle; isocitrate from oxaloacetate: step 1/2. Involved in the catabolism of short chain fatty acids (SCFA) via the tricarboxylic acid (TCA)(acetyl degradation route) and via the 2-methylcitrate cycle II (propionate degradation route). Catalyzes the Claisen condensation of propionyl-CoA and oxaloacetate (OAA) to yield 2-methylcitrate (2-MC) and CoA. Catalyzes the condensation of oxaloacetate with acetyl-CoA. The chain is 2-methylcitrate synthase (prpC) from Shewanella oneidensis (strain ATCC 700550 / JCM 31522 / CIP 106686 / LMG 19005 / NCIMB 14063 / MR-1).